The primary structure comprises 136 residues: Probable disulfide formation protein (136 aa).

The chain crosses the membrane as a helical span at residues 7 to 26 (NNALYFAWLICSTGTVMSIY). Residues Cys36 and Cys39 are joined by a disulfide bond. 2 helical membrane-spanning segments follow: residues 41–60 (YQRI…TYRE) and 67–84 (YALP…YQIC). A disulfide bond links Cys96 and Cys101. Residues 109–133 (GFITVPMASALAFCAISCLLILSGS) traverse the membrane as a helical segment.

Belongs to the DsbB family. BdbC subfamily.

It is found in the cell inner membrane. In terms of biological role, required for disulfide bond formation in some proteins. In Chlamydia caviae (strain ATCC VR-813 / DSM 19441 / 03DC25 / GPIC) (Chlamydophila caviae), this protein is Probable disulfide formation protein.